The sequence spans 498 residues: MDAMKYNDLRDFLTLLEQQGELKRITLPVDPHLEITEIWLDRTLRAGGPALLFENPKGYSMPVLCNLFGTPKRVAMGMGQEDVSALREVGKLLAFLKEPEPPKGFRDLFDKLPQFKQVLNMPTKRLRGAPCQQKIVSGDDVDLNRIPIMTCWPEDAAPLITWGLTVTRGPHKERQNLGIYRQQLIGKNKLIMRWLSHRGGALDYQEWCAAHPGERFPVSVALGADPATILGAVTPVPDTLSEYAFAGLLRGTKTEVVKCISNDLEVPASAEIVLEGYIEQGETAPEGPYGDHTGYYNEVDSFPVFTVTHITQREDAIYHSTYTGRPPDEPAVLGVALNEVFVPILQKQFPEIVDFYLPPEGCSYRLAVVTIKKQYAGHAKRVMMGVWSFLRQFMYTKFVIVCDDDVNARDWNDVIWAITTRMDPARDTVLVENTPIDYLDFASPVSGLGSKMGLDATNKWPGETQREWGRPIKKDPDVVAHIDAIWDELAIFNNGKSA.

Residue Asn-176 participates in Mn(2+) binding. Prenylated FMN is bound by residues 179–181, 193–195, and 198–199; these read IYR, RWL, and RG. Residue Glu-242 participates in Mn(2+) binding. Asp-291 (proton donor) is an active-site residue.

It belongs to the UbiD family. In terms of assembly, homohexamer. Requires prenylated FMN as cofactor. It depends on Mn(2+) as a cofactor.

The protein localises to the cell membrane. The catalysed reaction is a 4-hydroxy-3-(all-trans-polyprenyl)benzoate + H(+) = a 2-(all-trans-polyprenyl)phenol + CO2. Its pathway is cofactor biosynthesis; ubiquinone biosynthesis. In terms of biological role, catalyzes the decarboxylation of 3-octaprenyl-4-hydroxy benzoate to 2-octaprenylphenol, an intermediate step in ubiquinone biosynthesis. In Escherichia coli O6:K15:H31 (strain 536 / UPEC), this protein is 3-octaprenyl-4-hydroxybenzoate carboxy-lyase.